Consider the following 83-residue polypeptide: Small ribosomal subunit protein uS17 (83 aa).

Belongs to the universal ribosomal protein uS17 family. Part of the 30S ribosomal subunit.

One of the primary rRNA binding proteins, it binds specifically to the 5'-end of 16S ribosomal RNA. The protein is Small ribosomal subunit protein uS17 of Acaryochloris marina (strain MBIC 11017).